Here is a 136-residue protein sequence, read N- to C-terminus: Small ribosomal subunit protein bS6 (136 aa).

The segment covering 117–130 has biased composition (basic and acidic residues); it reads EERSRSSRRQREDV. A disordered region spans residues 117–136; sequence EERSRSSRRQREDVIEGVEL.

This sequence belongs to the bacterial ribosomal protein bS6 family.

Its function is as follows. Binds together with bS18 to 16S ribosomal RNA. This Bartonella quintana (strain Toulouse) (Rochalimaea quintana) protein is Small ribosomal subunit protein bS6.